Reading from the N-terminus, the 250-residue chain is Histone H1.1 (250 aa).

A compositionally biased stretch (polar residues) spans 1–11 (MSDSAVATSAS). Disordered stretches follow at residues 1–52 (MSDS…QQMV) and 104–250 (QTKG…ATKK). Positions 44–118 (SHPPTQQMVD…GASGSFKLSA (75 aa)) constitute an H15 domain. Basic and acidic residues predominate over residues 122 to 133 (KDAKPKASAVEK). Low complexity predominate over residues 140 to 161 (ASAARATKSKSSTSTTKKAAGA). Residues 174–191 (KNVEKKKADKEKAKDAKK) are compositionally biased toward basic and acidic residues. Over residues 192-234 (TGTIKAKPTTAKAKSSATKPKTPKPKTTSAKPKKVVSATTPKK) the composition is skewed to low complexity. The segment covering 235 to 250 (TAVKKPKAKTASATKK) has biased composition (basic residues).

Belongs to the histone H1/H5 family.

The protein resides in the nucleus. It is found in the chromosome. Functionally, histones H1 are necessary for the condensation of nucleosome chains into higher-order structures. The chain is Histone H1.1 (His1.1) from Drosophila virilis (Fruit fly).